The primary structure comprises 444 residues: E1B 55 kDa protein (444 aa).

The disordered stretch occupies residues 1–27 (MEQDSDLESGRATNQRPPRVRVRGAGV). A phosphoserine mark is found at Ser-438 and Ser-439.

This sequence belongs to the adenoviridae E1B 55 kDa protein family. Interacts with host PML-4 and PML-5; this interaction promotes efficient subnuclear targeting of E1B-55K to PML nuclear bodies. Interacts with E4-ORF3 protein. Interacts with E4-ORF6 protein.

It localises to the host nucleus. It is found in the host cytoplasm. Plays a major role to prevent cellular inhibition of viral genome replication. Assembles an SCF-like E3 ubiquitin ligase complex based on the cellular proteins ELOB, ELOC, CUL5 and RBX1, in cooperation with viral E4orf6. This viral RING-type ligase ubiquitinates cellular substrates and targets them to proteasomal degradation: TP53/p53, LIG4, MRE11-RAD50-NBS1 (MRN) complex, ITGA3, DAXX and BLM. E1B-55K probably acts as the substrate-specific adapter of the SCF-like E3 ubiquitin ligase complex. Degradation of host TP53/p53 activity is essential for preventing E1A-induced TP53 accumulation that would otherwise lead to cell apoptosis and growth arrest. E1B-55K also inactivates TP53 transcription-factor activity by binding its transactivation domain. E1B-55K also functions as a SUMO1 E3 ligase for TP53 which causes the latter to be sequestered in promyelocytic leukemia (PML) nuclear bodies thereby contributing to maximal inhibition of TP53 function. The protein is E1B 55 kDa protein of Canis lupus familiaris (Dog).